Consider the following 71-residue polypeptide: MATRDSGGQSQTGRSQQGEEIEDVTTEASAEAAERHAEITEDVDDLLDEIDSVLEENAEEFVRGYVQKGGE.

Residues 1-18 (MATRDSGGQSQTGRSQQG) are compositionally biased toward low complexity. The interval 1–42 (MATRDSGGQSQTGRSQQGEEIEDVTTEASAEAAERHAEITED) is disordered. An ARC ATPase binding region spans residues 27-65 (EASAEAAERHAEITEDVDDLLDEIDSVLEENAEEFVRGY). Positions 29-60 (SAEAAERHAEITEDVDDLLDEIDSVLEENAEE) form a coiled coil. Residue E71 forms an Isoglutamyl lysine isopeptide (Glu-Lys) (interchain with K-? in acceptor proteins) linkage.

The protein belongs to the prokaryotic ubiquitin-like protein family. In terms of assembly, strongly interacts with the proteasome-associated ATPase ARC through a hydrophobic interface; the interacting region of Pup lies in its C-terminal half. There is one Pup binding site per ARC hexamer ring.

Its pathway is protein degradation; proteasomal Pup-dependent pathway. Its function is as follows. Protein modifier that is covalently attached to lysine residues of substrate proteins, thereby targeting them for proteasomal degradation. The tagging system is termed pupylation. In Salinispora tropica (strain ATCC BAA-916 / DSM 44818 / JCM 13857 / NBRC 105044 / CNB-440), this protein is Prokaryotic ubiquitin-like protein Pup.